The chain runs to 459 residues: Cysteine--tRNA ligase (459 aa).

Residue C31 participates in Zn(2+) binding. The short motif at 33–43 (PTVYDNPHIGN) is the 'HIGH' region element. The Zn(2+) site is built by C216, H241, and E245. Positions 274-278 (KMSKS) match the 'KMSKS' region motif. An ATP-binding site is contributed by K277.

The protein belongs to the class-I aminoacyl-tRNA synthetase family. Monomer. Zn(2+) is required as a cofactor.

Its subcellular location is the cytoplasm. The catalysed reaction is tRNA(Cys) + L-cysteine + ATP = L-cysteinyl-tRNA(Cys) + AMP + diphosphate. The chain is Cysteine--tRNA ligase from Rickettsia felis (strain ATCC VR-1525 / URRWXCal2) (Rickettsia azadi).